Reading from the N-terminus, the 497-residue chain is Probable cytosol aminopeptidase (497 aa).

Residues Lys-267 and Asp-272 each coordinate Mn(2+). Lys-279 is an active-site residue. The Mn(2+) site is built by Asp-290, Asp-349, and Glu-351. Residue Arg-353 is part of the active site.

Belongs to the peptidase M17 family. The cofactor is Mn(2+).

It is found in the cytoplasm. The enzyme catalyses Release of an N-terminal amino acid, Xaa-|-Yaa-, in which Xaa is preferably Leu, but may be other amino acids including Pro although not Arg or Lys, and Yaa may be Pro. Amino acid amides and methyl esters are also readily hydrolyzed, but rates on arylamides are exceedingly low.. It catalyses the reaction Release of an N-terminal amino acid, preferentially leucine, but not glutamic or aspartic acids.. Presumably involved in the processing and regular turnover of intracellular proteins. Catalyzes the removal of unsubstituted N-terminal amino acids from various peptides. This Pseudomonas putida (strain ATCC 47054 / DSM 6125 / CFBP 8728 / NCIMB 11950 / KT2440) protein is Probable cytosol aminopeptidase.